A 328-amino-acid polypeptide reads, in one-letter code: tRNA uridine(34) hydroxylase (328 aa).

The Rhodanese domain maps to 130-224 (LDEDTVVLDT…YGKDPEVQGE (95 aa)). Catalysis depends on C184, which acts as the Cysteine persulfide intermediate.

Belongs to the TrhO family.

It carries out the reaction uridine(34) in tRNA + AH2 + O2 = 5-hydroxyuridine(34) in tRNA + A + H2O. In terms of biological role, catalyzes oxygen-dependent 5-hydroxyuridine (ho5U) modification at position 34 in tRNAs. The protein is tRNA uridine(34) hydroxylase of Streptococcus pyogenes serotype M6 (strain ATCC BAA-946 / MGAS10394).